The primary structure comprises 370 residues: Mitogen-activated protein kinase mpkC (370 aa).

Residues 19–298 (YANVRPVGLG…AAESLEHPYL (280 aa)) enclose the Protein kinase domain. Residues 25 to 33 (VGLGAFGLV) and Lys-48 each bind ATP. Catalysis depends on Asp-140, which acts as the Proton acceptor. Thr-170 carries the post-translational modification Phosphothreonine. Residues 170-172 (TGY) carry the TXY motif. A Phosphotyrosine modification is found at Tyr-172.

The protein belongs to the protein kinase superfamily. Ser/Thr protein kinase family. MAP kinase subfamily. HOG1 sub-subfamily. The cofactor is Mg(2+). Dually phosphorylated on Thr-170 and Tyr-172, which activates the enzyme.

It carries out the reaction L-seryl-[protein] + ATP = O-phospho-L-seryl-[protein] + ADP + H(+). It catalyses the reaction L-threonyl-[protein] + ATP = O-phospho-L-threonyl-[protein] + ADP + H(+). Its activity is regulated as follows. Activated by tyrosine and threonine phosphorylation. Its function is as follows. Mitogen-activated protein kinase required for growth on media where sorbitol or mannitol is the sole carbon source. The polypeptide is Mitogen-activated protein kinase mpkC (mpkC) (Aspergillus terreus (strain NIH 2624 / FGSC A1156)).